Reading from the N-terminus, the 312-residue chain is Aquaporin-6 (312 aa).

Topologically, residues 1–50 (MDDKFDDDALPNSKTTAKDYEDKLPEYDYTTTFPNTWMRLREPFREYFAE) are cytoplasmic. A helical transmembrane segment spans residues 51-71 (FVGVAVLIIFGVGADCQVVLS). Residues 72 to 89 (ANTGVASSPKGSYLSLNC) are Extracellular-facing. The helical transmembrane segment at 90–110 (GWAIGTAMGVWISGGISGGHI) threads the bilayer. Positions 111–113 (NPA) match the NPA 1 motif. The Cytoplasmic portion of the chain corresponds to 111-128 (NPAVTLAMATWRGFPWWK). A helical membrane pass occupies residues 129–149 (VPGFIFAQLLGGIVGAGLVYV). Topologically, residues 150 to 183 (NYIHAIDIVEGGRHIRTLDTAGLFATYAADYMTN) are extracellular. Asparagine 183 is a glycosylation site (N-linked (GlcNAc...) asparagine). A helical transmembrane segment spans residues 184–204 (LSCFFSEFLATAVLIIVIHAM). Topologically, residues 205–213 (NDKRNTPPP) are cytoplasmic. Residues 214–234 (AGIVPFVLFFLILGIGASLGM) form a helical membrane-spanning segment. Residues 235 to 267 (ETGYAINPARDLGPRMLTAMVGYGRQVFAFRNQ) lie on the Extracellular side of the membrane. The NPA 2 signature appears at 241–243 (NPA). The helical transmembrane segment at 268 to 288 (YWIWCPVLAPFLGAQVGTIFY) threads the bilayer. At 289-312 (DLFFYKGQDNVFGRLGSHIHISPA) the chain is on the cytoplasmic side.

This sequence belongs to the MIP/aquaporin (TC 1.A.8) family.

The protein localises to the membrane. The enzyme catalyses H2O(in) = H2O(out). Water channel required to facilitate the transport of water across membranes. Does not mediate the transport carbon dioxide nor nitric oxide across the membrane. Plays a key role in root water transport of mycorrhizal plant such ectomycorrhizal white spruce or trembling aspen via the hydration at the hyphal-root interphase. Contributes in fungal cellular processes during the basidiocarp formation. This chain is Aquaporin-6, found in Laccaria bicolor (Bicoloured deceiver).